Reading from the N-terminus, the 546-residue chain is MAAKEVKFGDSARKKMLVGVNVLADAVKATLGPKGRNVVLEKSFGAPTITKDGVSVAKEIELKDRFENMGAQLVKDVASKANDEAGDGTTTATVLAQAIVNEGLKAVAAGMNPMDLKRGIDKATIAIVAELKQLAKPCTDSKAIAQVGTISANSDESIGQIIAEAMERVGKEGVITVEEGSGFENELSVVEGMQFDRGYLSPYFINKPDTMVAELDNPLLLLVDKKISNIRELLPVLEGVAKAGRPLLIVAEDVEGEALATLVVNNMRGIVKVAAVKAPGFGDRRKAMLQDIAILTGGTVISEEVGLSLETATLEHLGNAKRVVLNKENTTIIDGAGAQADIEARVAQIRKQIEDTTSDYDKEKLQERLAKLAGGVAVIKVGAGTEVEMKEKKARVEDALHATRAAVEEGVVPGGGVALVRALQAISELKGDNEDQNVGIALLRRAVEAPLRQIVANAGGEPSVVVDKVKQGSGNYGFNAASDTYGDMIEMGILDPAKVTRSALQAAASIGGLMVTTEAMVAEVVEDKPAPAMPDMGGMGGMGGMM.

Residues 30-33 (TLGP), Lys51, 87-91 (DGTTT), Gly415, 479-481 (NAA), and Asp495 each bind ATP.

The protein belongs to the chaperonin (HSP60) family. In terms of assembly, forms a cylinder of 14 subunits composed of two heptameric rings stacked back-to-back. Interacts with the co-chaperonin GroES.

Its subcellular location is the cytoplasm. It catalyses the reaction ATP + H2O + a folded polypeptide = ADP + phosphate + an unfolded polypeptide.. Functionally, together with its co-chaperonin GroES, plays an essential role in assisting protein folding. The GroEL-GroES system forms a nano-cage that allows encapsulation of the non-native substrate proteins and provides a physical environment optimized to promote and accelerate protein folding. This Stutzerimonas stutzeri (strain A1501) (Pseudomonas stutzeri) protein is Chaperonin GroEL.